The sequence spans 501 residues: Endonuclease domain-containing 1 protein (501 aa).

The first 21 residues, 1 to 21, serve as a signal peptide directing secretion; it reads MGCARWLALGGLLALAGLLQA. Residue Lys408 is modified to N6-acetyllysine.

This sequence belongs to the DNA/RNA non-specific endonuclease family. In terms of assembly, interacts with RNF26; this interaction is important to modulate innate immune signaling through the cGAS-STING pathway.

Its subcellular location is the secreted. In terms of biological role, may act as a DNase and a RNase. Plays a role in the modulation of innate immune signaling through the cGAS-STING pathway by interacting with RNF26. This Mus musculus (Mouse) protein is Endonuclease domain-containing 1 protein (Endod1).